The primary structure comprises 115 residues: U3-lycotoxin-Ls1h (115 aa).

The N-terminal stretch at 1–20 (MKFVLLFGVFLVTLFSYSSA) is a signal peptide. Residues 21 to 44 (EMLDDFDQADEDELLSLIEKEEAR) constitute a propeptide that is removed on maturation. Disulfide bonds link C48-C63, C55-C72, C62-C87, and C74-C85.

It belongs to the neurotoxin 19 (CSTX) family. 01 subfamily. As to expression, expressed by the venom gland.

Its subcellular location is the secreted. The chain is U3-lycotoxin-Ls1h from Lycosa singoriensis (Wolf spider).